The primary structure comprises 182 residues: Flagellar transcriptional regulator FlhC (182 aa).

Zn(2+) contacts are provided by cysteine 138, cysteine 141, cysteine 158, and cysteine 161.

It belongs to the FlhC family. In terms of assembly, heterohexamer composed of two FlhC and four FlhD subunits. Each FlhC binds a FlhD dimer, forming a heterotrimer, and a hexamer assembles by dimerization of two heterotrimers. Requires Zn(2+) as cofactor.

The protein localises to the cytoplasm. Its function is as follows. Functions in complex with FlhD as a master transcriptional regulator that regulates transcription of several flagellar and non-flagellar operons by binding to their promoter region. Activates expression of class 2 flagellar genes, including fliA, which is a flagellum-specific sigma factor that turns on the class 3 genes. Also regulates genes whose products function in a variety of physiological pathways. The chain is Flagellar transcriptional regulator FlhC from Gallionella capsiferriformans (strain ES-2) (Gallionella ferruginea capsiferriformans (strain ES-2)).